The primary structure comprises 373 residues: UDP-N-acetylglucosamine--N-acetylmuramyl-(pentapeptide) pyrophosphoryl-undecaprenol N-acetylglucosamine transferase (373 aa).

Residues 13-15 (TGG), Asn-124, Arg-165, Ser-192, and Gln-293 contribute to the UDP-N-acetyl-alpha-D-glucosamine site.

The protein belongs to the glycosyltransferase 28 family. MurG subfamily.

It localises to the cell inner membrane. It catalyses the reaction di-trans,octa-cis-undecaprenyl diphospho-N-acetyl-alpha-D-muramoyl-L-alanyl-D-glutamyl-meso-2,6-diaminopimeloyl-D-alanyl-D-alanine + UDP-N-acetyl-alpha-D-glucosamine = di-trans,octa-cis-undecaprenyl diphospho-[N-acetyl-alpha-D-glucosaminyl-(1-&gt;4)]-N-acetyl-alpha-D-muramoyl-L-alanyl-D-glutamyl-meso-2,6-diaminopimeloyl-D-alanyl-D-alanine + UDP + H(+). It functions in the pathway cell wall biogenesis; peptidoglycan biosynthesis. In terms of biological role, cell wall formation. Catalyzes the transfer of a GlcNAc subunit on undecaprenyl-pyrophosphoryl-MurNAc-pentapeptide (lipid intermediate I) to form undecaprenyl-pyrophosphoryl-MurNAc-(pentapeptide)GlcNAc (lipid intermediate II). This chain is UDP-N-acetylglucosamine--N-acetylmuramyl-(pentapeptide) pyrophosphoryl-undecaprenol N-acetylglucosamine transferase, found in Sinorhizobium fredii (strain NBRC 101917 / NGR234).